The following is a 336-amino-acid chain: Probable G-protein coupled receptor 82 (336 aa).

The Extracellular portion of the chain corresponds to 1 to 11 (MNNNTTCIQPS). 2 N-linked (GlcNAc...) asparagine glycosylation sites follow: asparagine 3 and asparagine 4. Residues 12 to 32 (MISSMALPIIYILLCIVGVFG) form a helical membrane-spanning segment. Over 33–55 (NTLSQWIFLTKIGKKTSTHIYLS) the chain is Cytoplasmic. Residues 56 to 76 (HLVTANLLVCSAMPFMSIYFL) form a helical membrane-spanning segment. At 77–92 (KGFQWEYQSAQCRVVN) the chain is on the extracellular side. A helical transmembrane segment spans residues 93–115 (FLGTLSMHASMFVSLLILSWIAI). Residues 116 to 156 (SRYATLMQKDSSQETTSCYEKIFYGHLLKKFRQPNFARKLC) are Cytoplasmic-facing. The chain crosses the membrane as a helical span at residues 157-177 (IYIWGVVLGIIIPVTVYYSVI). The Extracellular segment spans residues 178–197 (EATEGEESLCYNRQMELGAM). The chain crosses the membrane as a helical span at residues 198–218 (ISQIAGLIGTTFIGFSFLVVL). The Cytoplasmic segment spans residues 219 to 251 (TSYYSFVSHLRKIRTCTSIMEKDLTYSSVKRHL). A helical transmembrane segment spans residues 252-272 (LVIQILLIVCFLPYSIFKPIF). Topologically, residues 273 to 336 (YVLHQRDNCQ…SNSAHMQSYG (64 aa)) are extracellular.

It belongs to the G-protein coupled receptor 1 family.

The protein resides in the cell membrane. Orphan receptor. The chain is Probable G-protein coupled receptor 82 (GPR82) from Homo sapiens (Human).